A 158-amino-acid polypeptide reads, in one-letter code: SsrA-binding protein (158 aa).

It belongs to the SmpB family.

It localises to the cytoplasm. Required for rescue of stalled ribosomes mediated by trans-translation. Binds to transfer-messenger RNA (tmRNA), required for stable association of tmRNA with ribosomes. tmRNA and SmpB together mimic tRNA shape, replacing the anticodon stem-loop with SmpB. tmRNA is encoded by the ssrA gene; the 2 termini fold to resemble tRNA(Ala) and it encodes a 'tag peptide', a short internal open reading frame. During trans-translation Ala-aminoacylated tmRNA acts like a tRNA, entering the A-site of stalled ribosomes, displacing the stalled mRNA. The ribosome then switches to translate the ORF on the tmRNA; the nascent peptide is terminated with the 'tag peptide' encoded by the tmRNA and targeted for degradation. The ribosome is freed to recommence translation, which seems to be the essential function of trans-translation. This chain is SsrA-binding protein, found in Buchnera aphidicola subsp. Baizongia pistaciae (strain Bp).